A 419-amino-acid polypeptide reads, in one-letter code: Dimethylamine methyltransferase MtbB2 (419 aa).

Pyl-308 is a non-standard amino acid (pyrrolysine).

The protein belongs to the dimethylamine methyltransferase family.

It catalyses the reaction Co(I)-[dimethylamine-specific corrinoid protein] + dimethylamine + H(+) = methyl-Co(III)-[dimethylamine-specific corrinoid protein] + methylamine. It participates in one-carbon metabolism; methanogenesis from dimethylamine. Catalyzes the transfer of a methyl group from dimethylamine to the corrinoid cofactor of MtbC. No evidence for expression of this protein has been found after growth under presumably inducing conditions. This chain is Dimethylamine methyltransferase MtbB2, found in Methanosarcina barkeri.